Reading from the N-terminus, the 244-residue chain is Signal recognition particle receptor subunit beta (244 aa).

Residues 7–23 (IIACLLVIGTTIALIAV) traverse the membrane as a helical segment. GTP is bound by residues 45–53 (GPQNSGKTS), 66–69 (TVVS), G90, and 154–157 (NKSE).

It belongs to the SRP receptor beta subunit family. In terms of assembly, heterodimer of an alpha and a beta chain.

The protein localises to the endoplasmic reticulum membrane. Its function is as follows. Component of the signal recognition particle (SRP) complex receptor (SR). Ensures, in conjunction with the SRP complex, the correct targeting of the nascent secretory proteins to the endoplasmic reticulum membrane system. May mediate the membrane association of SR. In Saccharomyces cerevisiae (strain ATCC 204508 / S288c) (Baker's yeast), this protein is Signal recognition particle receptor subunit beta (SRP102).